The primary structure comprises 179 residues: Large ribosomal subunit protein uL5 (179 aa).

This sequence belongs to the universal ribosomal protein uL5 family. As to quaternary structure, part of the 50S ribosomal subunit; part of the 5S rRNA/L5/L18/L25 subcomplex. Contacts the 5S rRNA and the P site tRNA. Forms a bridge to the 30S subunit in the 70S ribosome.

Its function is as follows. This is one of the proteins that bind and probably mediate the attachment of the 5S RNA into the large ribosomal subunit, where it forms part of the central protuberance. In the 70S ribosome it contacts protein S13 of the 30S subunit (bridge B1b), connecting the 2 subunits; this bridge is implicated in subunit movement. Contacts the P site tRNA; the 5S rRNA and some of its associated proteins might help stabilize positioning of ribosome-bound tRNAs. The protein is Large ribosomal subunit protein uL5 of Dechloromonas aromatica (strain RCB).